The sequence spans 590 residues: MNVQIFILLLIISWLTPKITSLPPESQVLDRSSFPDDFVFGTAISAFQSEGATSEGGKSPTIWDYFSHTFPERTNMQNADVAVDFYHRYKDDIKLIEELNVDAFRFSISWARLIPSGKVKDGVNKEGVQFYKALIDELIANGIQPSVTLYHWDHPQALEDEYGGFLNPQIIEDFRNFARVCFENFGDKVKMWTTINEPYVISVAGYDTGIKAVGRCSKWVNSRCQAGDSAIEPYIVSHHLLLSHAAAVQEFRNCNKTLQDGKIGIVISPWWLEPYDSTSSADKEAVERGLPLELEWHLNPVIYGDYPETMKKHVGNRLPAFTPEQSKMLINSSDFIGVNYYSIHFTAHLPHIDHTRPRFRTDHHFEKKLINRSNHETGPGDDRGKIHSHPEGLRRVLNYIKDKYNNPIVYVKENGIDHYDDGTKSRETILKDTFRISYHQDHLKQVHKAIIEDGCDVRGYYVWSLFDNFEWEHGYNSRFGMYYVDFKNNLQRYPKDSVNWFKKFLSRPVVRSEETEDEKVCNVSRKEEKINKALDVSEGFKTSVDSIVNLIKNGSRIEEEDDEEERDFCAFKNHNDQLGFFLKLQNSLGF.

The N-terminal stretch at 1–21 (MNVQIFILLLIISWLTPKITS) is a signal peptide. Residues Q48, H151, and 196-197 (NE) contribute to the a beta-D-glucoside site. E197 (proton donor) is an active-site residue. The cysteines at positions 216 and 224 are disulfide-linked. N255 and N331 each carry an N-linked (GlcNAc...) asparagine glycan. An a beta-D-glucoside-binding site is contributed by Y341. N371 carries an N-linked (GlcNAc...) asparagine glycan. Residues E413, W463, 470–471 (EW), and F479 contribute to the a beta-D-glucoside site. The active-site Nucleophile is E413. 2 N-linked (GlcNAc...) asparagine glycosylation sites follow: N522 and N553.

Belongs to the glycosyl hydrolase 1 family.

It catalyses the reaction Hydrolysis of terminal, non-reducing beta-D-glucosyl residues with release of beta-D-glucose.. The sequence is that of Beta-glucosidase 29 from Arabidopsis thaliana (Mouse-ear cress).